Here is an 87-residue protein sequence, read N- to C-terminus: Small ribosomal subunit protein uS17 (87 aa).

Belongs to the universal ribosomal protein uS17 family. Part of the 30S ribosomal subunit.

In terms of biological role, one of the primary rRNA binding proteins, it binds specifically to the 5'-end of 16S ribosomal RNA. The chain is Small ribosomal subunit protein uS17 from Bacillus cereus (strain ATCC 14579 / DSM 31 / CCUG 7414 / JCM 2152 / NBRC 15305 / NCIMB 9373 / NCTC 2599 / NRRL B-3711).